We begin with the raw amino-acid sequence, 826 residues long: Outer membrane usher protein YehB (826 aa).

The signal sequence occupies residues 1–22; the sequence is MLRMTPLASAIVALLLGIEAYA. Cysteine 809 and cysteine 825 are disulfide-bonded.

Belongs to the fimbrial export usher family.

The protein localises to the cell outer membrane. Functionally, part of the yehABCD fimbrial operon. Could contribute to adhesion to various surfaces in specific environmental niches. Probably involved in the export and assembly of fimbrial subunits across the outer membrane. The sequence is that of Outer membrane usher protein YehB (yehB) from Escherichia coli (strain K12).